The sequence spans 680 residues: Conserved oligomeric Golgi complex subunit 6 (680 aa).

The tract at residues 479 to 517 is disordered; that stretch reads HKSKKSGQLPRRSRTSSDSSQLTSVDALLSSSPSPPQNN.

This sequence belongs to the COG6 family. As to quaternary structure, component of the conserved oligomeric Golgi complex which is composed of eight different subunits and is required for normal Golgi morphology and localization. Interacts with COG5, COG7 and COG8.

The protein localises to the golgi apparatus membrane. In terms of biological role, required for normal Golgi function. The sequence is that of Conserved oligomeric Golgi complex subunit 6 from Arabidopsis thaliana (Mouse-ear cress).